We begin with the raw amino-acid sequence, 233 residues long: Small ribosomal subunit protein uS3 (233 aa).

Residues 39-107 enclose the KH type-2 domain; that stretch reads IRAFLKRKLY…DVNINIKEER (69 aa). The span at 212-222 shows a compositional bias: basic and acidic residues; it reads MQPEKTEESAP. Residues 212-233 are disordered; the sequence is MQPEKTEESAPAKKPRRTRRGK. Residues 224-233 are compositionally biased toward basic residues; it reads KKPRRTRRGK.

It belongs to the universal ribosomal protein uS3 family. As to quaternary structure, part of the 30S ribosomal subunit. Forms a tight complex with proteins S10 and S14.

Functionally, binds the lower part of the 30S subunit head. Binds mRNA in the 70S ribosome, positioning it for translation. This Campylobacter jejuni subsp. jejuni serotype O:6 (strain 81116 / NCTC 11828) protein is Small ribosomal subunit protein uS3.